A 572-amino-acid chain; its full sequence is MQGPLYIGFDLSTQQLKALVVNSDLKVVYVSKFDFDADSRGFPIKKGVITNEAEHEVYAPVALWLQALDGVLEGLKKQGLDFARVKGISGAGQQHGSVYWGQDAERLLKELDSGKSLEDQLSGAFSHPYSPNWQDSSTQKECDEFDAFLGGADKLANATGSKAHHRFTGPQILRFQRKYPEVYKKTSRISLVSSFLASLFLGHIAPLDISDACGMNLWNIKQGAYDEKLLQLCAGPSGVEDLKRKLGAVPEDGGINLGQIDRYYIERYGFSSDCTIIPATGDNPATILALPLRPSDAMVSLGTSTTFLMSTPNYMPDPATHFFNHPTTAGLYMFMLCYKNGGLAREHIRDAINDKLGMAGDKDPWANFDKITLETAPMGQKKDSDPMKMGLFFPRPEIVPNLRAGQWRFDYNPADGSLHETNGGWNKPADEARAIVESQFLSLRLRSRGLTASPGQGMPAQPRRVYLVGGGSKNKAIAKVAGEILGGSDGVYKLEIGDNACALGAAYKAVWALERKDGQTFEDLIGQRWREEDFIEKIADGYQKGVFEKYGAALEGFEKMELQVLKQEGETR.

Residues histidine 95, arginine 166, aspartate 282, and asparagine 283 each contribute to the substrate site. ATP is bound by residues tryptophan 365, glycine 470–glycine 471, and asparagine 474.

Belongs to the FGGY kinase family.

The protein resides in the cytoplasm. The enzyme catalyses D-xylulose + ATP = D-xylulose 5-phosphate + ADP + H(+). Highly specific D-xylulose kinase which participates in the catabolism of xylose. Xylose is a major component of hemicelluloses such as xylan. Most fungi utilize D-xylose via three enzymatic reactions, xylose reductase (XR), xylitol dehydrogenase (XDH), and xylulokinase, to form xylulose 5-phosphate, which enters pentose phosphate pathway. The chain is Probable D-xylulose kinase A (xkiA) from Aspergillus flavus (strain ATCC 200026 / FGSC A1120 / IAM 13836 / NRRL 3357 / JCM 12722 / SRRC 167).